We begin with the raw amino-acid sequence, 297 residues long: AKT-interacting protein (297 aa).

The segment covering 1–13 (MNLNPFWSMSTNT) has biased composition (polar residues). Residues 1–45 (MNLNPFWSMSTNTGRKRSDGEEQSGEQQQQQRASPARPSFGKKQL) are disordered. The span at 25–39 (GEQQQQQRASPARPS) shows a compositional bias: low complexity. In terms of domain architecture, UBC core spans 79–227 (YLEYSLLAEF…VVDSVKLCNS (149 aa)). The segment at 262 to 297 (KRRPEDHHKGLQVSGLSWVKPGSTQPFSKDDNPPQN) is disordered.

This sequence belongs to the ubiquitin-conjugating enzyme family. FTS subfamily.

It is found in the cytoplasm. The protein localises to the cell membrane. In terms of biological role, may function to promote vesicle trafficking and/or fusion. May also regulate apoptosis. The sequence is that of AKT-interacting protein (aktip) from Salmo salar (Atlantic salmon).